We begin with the raw amino-acid sequence, 223 residues long: NAD(P)H-hydrate epimerase (223 aa).

The region spanning 9 to 209 is the YjeF N-terminal domain; sequence MQKIDTYTVN…DIGLLTPPDF (201 aa). 57 to 61 provides a ligand contact to (6S)-NADPHX; sequence NNGAD. K(+) is bound by residues N58 and D119. (6S)-NADPHX-binding positions include 123–129 and D152; that span reads GTGLNNL. T155 contributes to the K(+) binding site.

This sequence belongs to the NnrE/AIBP family. K(+) serves as cofactor.

It carries out the reaction (6R)-NADHX = (6S)-NADHX. The enzyme catalyses (6R)-NADPHX = (6S)-NADPHX. Catalyzes the epimerization of the S- and R-forms of NAD(P)HX, a damaged form of NAD(P)H that is a result of enzymatic or heat-dependent hydration. This is a prerequisite for the S-specific NAD(P)H-hydrate dehydratase to allow the repair of both epimers of NAD(P)HX. This Leuconostoc gelidum subsp. gasicomitatum (strain DSM 15947 / CCUG 46042 / CECT 5767 / JCM 12535 / LMG 18811 / NBRC 113245 / TB1-10) (Leuconostoc gasicomitatum) protein is NAD(P)H-hydrate epimerase.